Consider the following 565-residue polypeptide: Augmin complex subunit dgt3 (565 aa).

Coiled coils occupy residues 135-171 (ELQL…AKKA) and 212-241 (QDYD…IQFY).

Belongs to the HAUS3 family. In terms of assembly, component of the augmin complex composed of dgt2, dgt3, dgt4, dgt5, dgt6, msd1, msd5 and wac. The complex interacts directly or indirectly with microtubules and is required for centrosome-independent generation of spindle microtubules.

Its subcellular location is the cytoplasm. The protein resides in the cytoskeleton. The protein localises to the spindle. Functionally, as part of the augmin complex, plays a role in centrosome-independent generation of spindle microtubules. The complex is required for mitotic spindle assembly through its involvement in localizing gamma-tubulin to spindle microtubules. The polypeptide is Augmin complex subunit dgt3 (Drosophila melanogaster (Fruit fly)).